The chain runs to 459 residues: Argininosuccinate lyase (459 aa).

Belongs to the lyase 1 family. Argininosuccinate lyase subfamily.

It localises to the cytoplasm. It carries out the reaction 2-(N(omega)-L-arginino)succinate = fumarate + L-arginine. Its pathway is amino-acid biosynthesis; L-arginine biosynthesis; L-arginine from L-ornithine and carbamoyl phosphate: step 3/3. The polypeptide is Argininosuccinate lyase (Geobacillus thermodenitrificans (strain NG80-2)).